The following is a 516-amino-acid chain: GMP synthase [glutamine-hydrolyzing] (516 aa).

The 197-residue stretch at 7–203 folds into the Glutamine amidotransferase type-1 domain; sequence SVIVLDFGSQ…LIDIAGITPD (197 aa). Cys84 acts as the Nucleophile in catalysis. Active-site residues include His177 and Glu179. The GMPS ATP-PPase domain occupies 204 to 391; that stretch reads WSPKSFIQHQ…LGIAEDILMR (188 aa). 231-237 is a binding site for ATP; the sequence is SGGVDST.

As to quaternary structure, homodimer.

It carries out the reaction XMP + L-glutamine + ATP + H2O = GMP + L-glutamate + AMP + diphosphate + 2 H(+). It functions in the pathway purine metabolism; GMP biosynthesis; GMP from XMP (L-Gln route): step 1/1. Functionally, catalyzes the synthesis of GMP from XMP. This is GMP synthase [glutamine-hydrolyzing] from Chlorobaculum tepidum (strain ATCC 49652 / DSM 12025 / NBRC 103806 / TLS) (Chlorobium tepidum).